We begin with the raw amino-acid sequence, 288 residues long: Pyridoxal kinase PdxY (288 aa).

Substrate is bound by residues Ser-9 and Thr-44 to Gln-45. 3 residues coordinate ATP: Asp-111, Glu-148, and Lys-181. Asp-224 lines the substrate pocket.

This sequence belongs to the pyridoxine kinase family. PdxY subfamily. As to quaternary structure, homodimer. It depends on Mg(2+) as a cofactor.

The catalysed reaction is pyridoxal + ATP = pyridoxal 5'-phosphate + ADP + H(+). It functions in the pathway cofactor metabolism; pyridoxal 5'-phosphate salvage; pyridoxal 5'-phosphate from pyridoxal: step 1/1. Pyridoxal kinase involved in the salvage pathway of pyridoxal 5'-phosphate (PLP). Catalyzes the phosphorylation of pyridoxal to PLP. This chain is Pyridoxal kinase PdxY, found in Haemophilus influenzae (strain PittEE).